The sequence spans 1135 residues: uncharacterized protein (1135 aa).

The N-terminal stretch at Met-1 to Ala-28 is a signal peptide. 7 consecutive transmembrane segments (helical) span residues Ile-332–Gly-352, Glu-359–Ile-379, Met-393–Met-413, Met-495–Val-515, Met-522–Ala-542, Met-555–Val-575, and Ile-700–Phe-720.

This sequence belongs to the TrbL/VirB6 family.

The protein localises to the cell membrane. This is an uncharacterized protein from Rickettsia typhi (strain ATCC VR-144 / Wilmington).